The primary structure comprises 434 residues: Chaperone SurA (434 aa).

An N-terminal signal peptide occupies residues 1–29 (MKTLRLNFRSAILKALGALLLLQGCLAHA). 2 PpiC domains span residues 180–281 (AEEY…AMLE) and 290–389 (VEQS…QVQD).

It is found in the periplasm. It catalyses the reaction [protein]-peptidylproline (omega=180) = [protein]-peptidylproline (omega=0). Functionally, chaperone involved in the correct folding and assembly of outer membrane proteins. Recognizes specific patterns of aromatic residues and the orientation of their side chains, which are found more frequently in integral outer membrane proteins. May act in both early periplasmic and late outer membrane-associated steps of protein maturation. In Hahella chejuensis (strain KCTC 2396), this protein is Chaperone SurA.